The chain runs to 268 residues: Glucosamine-6-phosphate deaminase (268 aa).

The Proton acceptor; for enolization step role is filled by D72. Residue D141 is the For ring-opening step of the active site. Residue H143 is the Proton acceptor; for ring-opening step of the active site. E148 serves as the catalytic For ring-opening step.

The protein belongs to the glucosamine/galactosamine-6-phosphate isomerase family. NagB subfamily.

It carries out the reaction alpha-D-glucosamine 6-phosphate + H2O = beta-D-fructose 6-phosphate + NH4(+). Its pathway is amino-sugar metabolism; N-acetylneuraminate degradation; D-fructose 6-phosphate from N-acetylneuraminate: step 5/5. Its activity is regulated as follows. Allosterically activated by N-acetylglucosamine 6-phosphate (GlcNAc6P). Its function is as follows. Catalyzes the reversible isomerization-deamination of glucosamine 6-phosphate (GlcN6P) to form fructose 6-phosphate (Fru6P) and ammonium ion. The chain is Glucosamine-6-phosphate deaminase from Borreliella afzelii (strain PKo) (Borrelia afzelii).